The chain runs to 341 residues: L-threonine 3-dehydrogenase (341 aa).

A Zn(2+)-binding site is contributed by Cys-38. Active-site charge relay system residues include Thr-40 and His-43. Residues His-63, Glu-64, Cys-93, Cys-96, Cys-99, and Cys-107 each coordinate Zn(2+). NAD(+) is bound by residues Ile-175, Asp-195, Arg-200, 262 to 264 (LGI), and 286 to 287 (IY).

Belongs to the zinc-containing alcohol dehydrogenase family. As to quaternary structure, homotetramer. It depends on Zn(2+) as a cofactor.

Its subcellular location is the cytoplasm. It catalyses the reaction L-threonine + NAD(+) = (2S)-2-amino-3-oxobutanoate + NADH + H(+). The protein operates within amino-acid degradation; L-threonine degradation via oxydo-reductase pathway; glycine from L-threonine: step 1/2. Its function is as follows. Catalyzes the NAD(+)-dependent oxidation of L-threonine to 2-amino-3-ketobutyrate. This is L-threonine 3-dehydrogenase from Salmonella choleraesuis (strain SC-B67).